Reading from the N-terminus, the 138-residue chain is Large ribosomal subunit protein uL16 (138 aa).

Residues 1 to 16 (MLIPRRVKHRKQHHPG) are compositionally biased toward basic residues. The interval 1–25 (MLIPRRVKHRKQHHPGRSGQATGGT) is disordered.

It belongs to the universal ribosomal protein uL16 family. In terms of assembly, part of the 50S ribosomal subunit.

In terms of biological role, binds 23S rRNA and is also seen to make contacts with the A and possibly P site tRNAs. The chain is Large ribosomal subunit protein uL16 from Renibacterium salmoninarum (strain ATCC 33209 / DSM 20767 / JCM 11484 / NBRC 15589 / NCIMB 2235).